The chain runs to 126 residues: Large ribosomal subunit protein bL20 (126 aa).

It belongs to the bacterial ribosomal protein bL20 family.

Its function is as follows. Binds directly to 23S ribosomal RNA and is necessary for the in vitro assembly process of the 50S ribosomal subunit. It is not involved in the protein synthesizing functions of that subunit. The sequence is that of Large ribosomal subunit protein bL20 from Acholeplasma laidlawii (strain PG-8A).